Consider the following 259-residue polypeptide: Indole-3-glycerol phosphate synthase (259 aa).

This sequence belongs to the TrpC family.

It catalyses the reaction 1-(2-carboxyphenylamino)-1-deoxy-D-ribulose 5-phosphate + H(+) = (1S,2R)-1-C-(indol-3-yl)glycerol 3-phosphate + CO2 + H2O. The protein operates within amino-acid biosynthesis; L-tryptophan biosynthesis; L-tryptophan from chorismate: step 4/5. The polypeptide is Indole-3-glycerol phosphate synthase (Dehalococcoides mccartyi (strain ATCC BAA-2266 / KCTC 15142 / 195) (Dehalococcoides ethenogenes (strain 195))).